We begin with the raw amino-acid sequence, 300 residues long: Acetylglutamate kinase (300 aa).

Substrate is bound by residues 73–74 (GG), arginine 95, and asparagine 197.

It belongs to the acetylglutamate kinase family. ArgB subfamily.

Its subcellular location is the cytoplasm. It carries out the reaction N-acetyl-L-glutamate + ATP = N-acetyl-L-glutamyl 5-phosphate + ADP. It participates in amino-acid biosynthesis; L-arginine biosynthesis; N(2)-acetyl-L-ornithine from L-glutamate: step 2/4. Catalyzes the ATP-dependent phosphorylation of N-acetyl-L-glutamate. The polypeptide is Acetylglutamate kinase (Polynucleobacter asymbioticus (strain DSM 18221 / CIP 109841 / QLW-P1DMWA-1) (Polynucleobacter necessarius subsp. asymbioticus)).